Consider the following 268-residue polypeptide: Eukaryotic translation initiation factor 3 subunit J (268 aa).

Disordered regions lie at residues 1–27 (MSWD…DDEF), 40–63 (DAEE…KVDK), and 217–249 (LAKV…KKDQ). Basic residues predominate over residues 47–58 (QKQKPKAAPKAA). The stretch at 191-221 (IESIRQTVATLNVLIKEKERQERQARLAKVK) forms a coiled coil.

It belongs to the eIF-3 subunit J family. In terms of assembly, component of the eukaryotic translation initiation factor 3 (eIF-3) complex.

The protein localises to the cytoplasm. In terms of biological role, component of the eukaryotic translation initiation factor 3 (eIF-3) complex, which is involved in protein synthesis of a specialized repertoire of mRNAs and, together with other initiation factors, stimulates binding of mRNA and methionyl-tRNAi to the 40S ribosome. The eIF-3 complex specifically targets and initiates translation of a subset of mRNAs involved in cell proliferation. This is Eukaryotic translation initiation factor 3 subunit J from Eremothecium gossypii (strain ATCC 10895 / CBS 109.51 / FGSC 9923 / NRRL Y-1056) (Yeast).